The following is a 40-amino-acid chain: Small polypeptide DEVIL 3 (40 aa).

A required for DVL/RTFL small polypeptide activity region spans residues 9–40; it reads PCNKKLGGYLKEQKGRLYIIRRCVVMLICWHD. Residues 12-28 traverse the membrane as a helical segment; that stretch reads KKLGGYLKEQKGRLYII.

Belongs to the DVL/RTFL small polypeptides family. In terms of tissue distribution, mostly expressed in flowers and stems, and, to a lower extent, in roots and leaves.

It is found in the cell membrane. Functionally, small polypeptide acting as a regulatory molecule which coordinates cellular responses required for differentiation, growth and development, including leaves shape, pedicule elongation, inflorescence organization and fruit maturation, probably by restricting polar cell proliferation in lateral organs and coordinating socket cell recruitment and differentiation at trichome sites. In Arabidopsis thaliana (Mouse-ear cress), this protein is Small polypeptide DEVIL 3.